We begin with the raw amino-acid sequence, 416 residues long: Peroxisomal isocitrate dehydrogenase [NADP] (416 aa).

Residues 77-79 (TIT) and R84 contribute to the NADP(+) site. Residue T79 participates in substrate binding. Residues 96–102 (SPNGTIR), R111, and R134 contribute to the substrate site. D253 is a binding site for Mn(2+). K261 contacts NADP(+). A Mn(2+)-binding site is contributed by D276. NADP(+)-binding positions include 311–316 (GTVTRH) and N329. Positions 414 to 416 (SRL) match the Peroxisomal targeting signal motif.

Belongs to the isocitrate and isopropylmalate dehydrogenases family. Mg(2+) serves as cofactor. The cofactor is Mn(2+).

It is found in the peroxisome. It catalyses the reaction D-threo-isocitrate + NADP(+) = 2-oxoglutarate + CO2 + NADPH. May be involved in response to oxidative stresses. This Arabidopsis thaliana (Mouse-ear cress) protein is Peroxisomal isocitrate dehydrogenase [NADP] (ICDH).